Reading from the N-terminus, the 437-residue chain is Probable inactive DNA (cytosine-5)-methyltransferase DRM1B (437 aa).

UBA domains are found at residues 20–60 (SAPS…LLQL) and 120–164 (EMSE…IYAP). The SAM-dependent MTase DRM-type domain occupies 243–437 (VHRNLPDHAL…LIQLHTTSLC (195 aa)).

It belongs to the class I-like SAM-binding methyltransferase superfamily. DRM-methyltransferase family.

Its subcellular location is the nucleus. In terms of biological role, involved in de novo DNA methylation. Involved in RNA-directed DNA methylation (RdDM). The protein is Probable inactive DNA (cytosine-5)-methyltransferase DRM1B of Oryza sativa subsp. japonica (Rice).